The primary structure comprises 101 residues: uncharacterized protein (101 aa).

A signal peptide spans 1–24 (MILMFRMNKGMSFITLLFSLALFS).

This is an uncharacterized protein from Haemophilus influenzae (strain ATCC 51907 / DSM 11121 / KW20 / Rd).